A 474-amino-acid polypeptide reads, in one-letter code: Protein IFIT1 homolog B (474 aa).

TPR repeat units follow at residues 52 to 85 (VGIH…IQKE), 95 to 128 (LVTW…CKKF), 141 to 174 (VDCE…NPEN), 182 to 216 (AITV…NPDD), 218 to 250 (YIRV…ISSQ), 251 to 284 (AYVF…TPTS), 305 to 339 (ATNW…KRTF), 340 to 373 (EMAY…KIFE), 378 to 412 (QEIH…EKMS), and 437 to 470 (VESV…AADL).

The protein belongs to the IFIT family.

In terms of biological role, IFIT1B is likely non-functional, lacking the critical antiviral role of IFIT1. Unlike IFIT1, which is essential in the innate immune response as part of an interferon-dependent multiprotein complex, IFIT1B does not prevent the translation of viral RNAs that lack host-specific 2'-O-methylation at their 5' cap. Consequently, it probably cannot inhibit their translation by competing with the host translation machinery. This Homo sapiens (Human) protein is Protein IFIT1 homolog B.